The primary structure comprises 508 residues: Lysine--tRNA ligase (508 aa).

Residues glutamate 418 and glutamate 425 each coordinate Mg(2+).

This sequence belongs to the class-II aminoacyl-tRNA synthetase family. In terms of assembly, homodimer. Mg(2+) serves as cofactor.

It localises to the cytoplasm. It catalyses the reaction tRNA(Lys) + L-lysine + ATP = L-lysyl-tRNA(Lys) + AMP + diphosphate. This chain is Lysine--tRNA ligase, found in Burkholderia mallei (strain NCTC 10247).